The sequence spans 229 residues: Protein-lysine N-methyltransferase EFM4 (229 aa).

Belongs to the class I-like SAM-binding methyltransferase superfamily. EFM4 family.

The protein localises to the cytoplasm. It carries out the reaction L-lysyl-[protein] + S-adenosyl-L-methionine = N(6)-methyl-L-lysyl-[protein] + S-adenosyl-L-homocysteine + H(+). The enzyme catalyses N(6)-methyl-L-lysyl-[protein] + S-adenosyl-L-methionine = N(6),N(6)-dimethyl-L-lysyl-[protein] + S-adenosyl-L-homocysteine + H(+). Functionally, S-adenosyl-L-methionine-dependent protein-lysine N-methyltransferase that mono- and dimethylates elongation factor 1-alpha (TEF1 and TEF2) at 'Lys-316'. May play a role in intracellular transport. In Saccharomyces cerevisiae (strain ATCC 204508 / S288c) (Baker's yeast), this protein is Protein-lysine N-methyltransferase EFM4.